The chain runs to 567 residues: Ran-binding protein 3 (567 aa).

Residues Met-1–Pro-10 are compositionally biased toward basic and acidic residues. Disordered stretches follow at residues Met-1–Gly-263, Leu-332–Ala-373, and Val-515–Thr-567. Ala-2 is modified (N-acetylalanine). 2 positions are modified to N6-acetyllysine: Lys-9 and Lys-21. The segment covering Glu-39 to His-49 has biased composition (basic and acidic residues). Position 75 is a phosphothreonine (Thr-75). Residues Thr-75–Pro-89 are compositionally biased toward pro residues. Ser-100, Ser-101, and Ser-108 each carry phosphoserine. The short motif at Pro-117 to Ser-125 is the Nuclear localization signal element. Thr-124 carries the post-translational modification Phosphothreonine. Composition is skewed to polar residues over residues Ser-125 to Gln-134 and Ala-184 to Val-197. Residue Ser-126 is modified to Phosphoserine. 5 positions are modified to phosphoserine: Ser-219, Ser-333, Ser-353, Ser-355, and Ser-372. Residues Glu-347–Ala-362 show a composition bias toward low complexity. One can recognise a RanBD1 domain in the interval Lys-378–Glu-518. Acidic residues predominate over residues Asn-534 to Val-544. Phosphoserine is present on Ser-539. Residues Gly-549–Thr-567 are compositionally biased toward low complexity.

In terms of assembly, interacts with CHC1 in a Ran-stimulated manner. Interacts with XPO1. Interacts (via its C-terminal R domain) with SMAD2 (dephosphorylated form via its MH1 and MH2 domains); the interaction results in the nuclear export of SMAD2 and termination of the TGF-beta signaling. Interacts (via its C-terminal R domain) with SMAD3 (dephosphorylated form via its MH1 domain); the interaction results in the nuclear export of SMAD3 and termination of the TGF-beta signaling. Phosphorylation at Ser-126 promotes its import into the nucleus. As to expression, widely expressed with high levels in testis and heart.

It is found in the cytoplasm. The protein localises to the nucleus. Acts as a cofactor for XPO1/CRM1-mediated nuclear export, perhaps as export complex scaffolding protein. Bound to XPO1/CRM1, stabilizes the XPO1/CRM1-cargo interaction. In the absence of Ran-bound GTP prevents binding of XPO1/CRM1 to the nuclear pore complex. Binds to CHC1/RCC1 and increases the guanine nucleotide exchange activity of CHC1/RCC1. Recruits XPO1/CRM1 to CHC1/RCC1 in a Ran-dependent manner. Negative regulator of TGF-beta signaling through interaction with the R-SMAD proteins, SMAD2 and SMAD3, and mediating their nuclear export. The polypeptide is Ran-binding protein 3 (RANBP3) (Homo sapiens (Human)).